We begin with the raw amino-acid sequence, 70 residues long: U-actitoxin-Avd11a (70 aa).

In terms of domain architecture, ShKT spans 36–70 (CNDYKSSSYCRSVGSRNECGIHKYRMYCRKTCGSC). Disulfide bonds link Cys-36/Cys-70, Cys-45/Cys-63, and Cys-54/Cys-67. A crucial for binding to potassium channels region spans residues 58–59 (KY).

Belongs to the sea anemone type 1 potassium channel toxin family. Type 1b subfamily.

Its subcellular location is the secreted. It is found in the nematocyst. In terms of biological role, inhibits voltage-gated potassium channels (Kv1/KCNA). In Anemonia viridis (Snakelocks anemone), this protein is U-actitoxin-Avd11a.